A 315-amino-acid polypeptide reads, in one-letter code: Ribosomal RNA small subunit methyltransferase H (315 aa).

Residues 37 to 39, Asp-57, Leu-91, Asp-105, and Gln-112 each bind S-adenosyl-L-methionine; that span reads GGH.

The protein belongs to the methyltransferase superfamily. RsmH family.

It localises to the cytoplasm. The catalysed reaction is cytidine(1402) in 16S rRNA + S-adenosyl-L-methionine = N(4)-methylcytidine(1402) in 16S rRNA + S-adenosyl-L-homocysteine + H(+). In terms of biological role, specifically methylates the N4 position of cytidine in position 1402 (C1402) of 16S rRNA. This chain is Ribosomal RNA small subunit methyltransferase H, found in Syntrophus aciditrophicus (strain SB).